The following is a 284-amino-acid chain: MAAFTTKQSLLLLSLLLLISLSAGSFYDNFDITWGNGRANIVESGQLLTCTLDKISGSGFQSKKEYLFGKIDMKMKLVAGNSAGTVTAYYLSSKGETWDEIDFEFLGNVTGQPYVLHTNVFTGGKGNREMQFYLWFDPTADFHTYTVLWNPLNIIFLVDGIPIRVFKNNEANGVAYPKSQPMKIYSSLWEADDWATQGGKVKTDWTNAPFSASYKSFNDVDCCSRTSLLNWVTCNANSNSWMWTTLNSNQYGQMKWVQDDYMIYNYCTDFKRFPQGLPTECNLN.

The first 24 residues, 1–24 (MAAFTTKQSLLLLSLLLLISLSAG), serve as a signal peptide directing secretion. A GH16 domain is found at 25 to 214 (SFYDNFDITW…WTNAPFSASY (190 aa)). E100 serves as the catalytic Nucleophile. E104 functions as the Proton donor in the catalytic mechanism. Residue E104 participates in xyloglucan binding. N108 carries N-linked (GlcNAc...) asparagine glycosylation. Xyloglucan contacts are provided by residues 117 to 119 (HTN), 127 to 129 (NRE), 193 to 194 (DW), and G198. 2 disulfides stabilise this stretch: C223–C234 and C267–C281. R272 provides a ligand contact to xyloglucan.

Belongs to the glycosyl hydrolase 16 family. XTH group 2 subfamily. In terms of processing, contains at least one intrachain disulfide bond essential for its enzymatic activity.

The protein resides in the secreted. The protein localises to the cell wall. It is found in the extracellular space. It localises to the apoplast. The enzyme catalyses breaks a beta-(1-&gt;4) bond in the backbone of a xyloglucan and transfers the xyloglucanyl segment on to O-4 of the non-reducing terminal glucose residue of an acceptor, which can be a xyloglucan or an oligosaccharide of xyloglucan.. May catalyze xyloglucan endohydrolysis (XEH) and/or endotransglycosylation (XET). Cleaves and religates xyloglucan polymers, an essential constituent of the primary cell wall, and thereby participates in cell wall construction of growing tissues. The sequence is that of Putative xyloglucan endotransglucosylase/hydrolase protein 13 (XTH13) from Arabidopsis thaliana (Mouse-ear cress).